A 450-amino-acid polypeptide reads, in one-letter code: Phosphoglucosamine mutase (450 aa).

Serine 101 acts as the Phosphoserine intermediate in catalysis. Mg(2+) is bound by residues serine 101, aspartate 243, aspartate 245, and aspartate 247. Serine 101 is subject to Phosphoserine.

Belongs to the phosphohexose mutase family. Requires Mg(2+) as cofactor. Post-translationally, activated by phosphorylation.

The enzyme catalyses alpha-D-glucosamine 1-phosphate = D-glucosamine 6-phosphate. Catalyzes the conversion of glucosamine-6-phosphate to glucosamine-1-phosphate. This Desulfotalea psychrophila (strain LSv54 / DSM 12343) protein is Phosphoglucosamine mutase.